A 209-amino-acid chain; its full sequence is Octanoyltransferase (209 aa).

Residues 30 to 209 (DHKPEIIYLV…IQTEFNKIFK (180 aa)) form the BPL/LPL catalytic domain. Substrate contacts are provided by residues 69 to 76 (RGGKFTFH), 143 to 145 (AIG), and 156 to 158 (GVA). The active-site Acyl-thioester intermediate is the C174.

This sequence belongs to the LipB family.

The protein resides in the cytoplasm. The enzyme catalyses octanoyl-[ACP] + L-lysyl-[protein] = N(6)-octanoyl-L-lysyl-[protein] + holo-[ACP] + H(+). Its pathway is protein modification; protein lipoylation via endogenous pathway; protein N(6)-(lipoyl)lysine from octanoyl-[acyl-carrier-protein]: step 1/2. In terms of biological role, catalyzes the transfer of endogenously produced octanoic acid from octanoyl-acyl-carrier-protein onto the lipoyl domains of lipoate-dependent enzymes. Lipoyl-ACP can also act as a substrate although octanoyl-ACP is likely to be the physiological substrate. This is Octanoyltransferase from Rickettsia conorii (strain ATCC VR-613 / Malish 7).